Reading from the N-terminus, the 409-residue chain is MNVSAIVVEYNPMHNGHLYHIEKTKKLTNCDALVCIMSGNFVQRGFPSILDKWTKANMAISNGVDLVIELPTLYSLSSAEFFSFGAVSILDSLNIINSICFGSEIGNINALQDIATTLLEEPLEYKILLKNYLDKGISFAKARNLALVELNRDNKIMSENISKILSLSNNILGIEYLKSLLLLNSSIKPFTITREGADYKDENLHEEYSSASSIRKYLKENKNINILKDFLPLEGFLEFKRLITKGYNFSMEDSMINYIRYKYISGYKNLHNLIDVSEGLDNRIYKSLEKNFTYDSLVGEIKSKRYAYSRIGRILCQYFIGFENYDLNSLLKSTPNYMRVLASNERGLKVLKEVKKHSSINIYTKLPKNTNTLLSLDIKATNAYSLLNNNIRFNEDYFRSPTIIKNTIY.

ATP-binding positions include 7 to 20, Gly-102, Asn-169, and Arg-194; that span reads VVEY…HLYH.

This sequence belongs to the TmcAL family.

Its subcellular location is the cytoplasm. It catalyses the reaction cytidine(34) in elongator tRNA(Met) + acetate + ATP = N(4)-acetylcytidine(34) in elongator tRNA(Met) + AMP + diphosphate. Catalyzes the formation of N(4)-acetylcytidine (ac(4)C) at the wobble position of elongator tRNA(Met), using acetate and ATP as substrates. First activates an acetate ion to form acetyladenylate (Ac-AMP) and then transfers the acetyl group to tRNA to form ac(4)C34. This is tRNA(Met) cytidine acetate ligase from Clostridium botulinum (strain Langeland / NCTC 10281 / Type F).